Consider the following 380-residue polypeptide: Outer membrane protein 40 (380 aa).

The first 21 residues, 1–21 (MKAKSLLLALAGLACTFSATA), serve as a signal peptide directing secretion. Pyrrolidone carboxylic acid is present on Gln-22. In terms of domain architecture, OmpA-like spans 270–380 (PTVTRVVVDN…NRIVVMTAAE (111 aa)).

Belongs to the outer membrane OOP (TC 1.B.6) superfamily. In terms of assembly, disulfide-linked heterodimer with Omp41.

It is found in the cell outer membrane. In terms of biological role, may have porin activity and function in peptidoglycan binding. The chain is Outer membrane protein 40 from Porphyromonas gingivalis (strain ATCC BAA-308 / W83).